Here is a 747-residue protein sequence, read N- to C-terminus: uncharacterized protein (747 aa).

The helical transmembrane segment at 7 to 27 (FFLKVISVIAPIVIIPTILAN) threads the bilayer.

The protein localises to the membrane. This is an uncharacterized protein from Ureaplasma parvum serovar 3 (strain ATCC 700970).